Here is a 90-residue protein sequence, read N- to C-terminus: Small ribosomal subunit protein uS15c (90 aa).

Belongs to the universal ribosomal protein uS15 family. In terms of assembly, part of the 30S ribosomal subunit.

It localises to the plastid. The protein resides in the chloroplast. The chain is Small ribosomal subunit protein uS15c (rps15-A) from Hordeum vulgare (Barley).